A 189-amino-acid chain; its full sequence is uncharacterized protein (189 aa).

Belongs to the OsmC/Ohr family.

This is an uncharacterized protein from Methanocaldococcus jannaschii (strain ATCC 43067 / DSM 2661 / JAL-1 / JCM 10045 / NBRC 100440) (Methanococcus jannaschii).